Reading from the N-terminus, the 139-residue chain is Small ribosomal subunit protein uS9 (139 aa).

It belongs to the universal ribosomal protein uS9 family.

The polypeptide is Small ribosomal subunit protein uS9 (Coxiella burnetii (strain CbuK_Q154) (Coxiella burnetii (strain Q154))).